We begin with the raw amino-acid sequence, 276 residues long: Thiazole synthase (276 aa).

The active-site Schiff-base intermediate with DXP is K117. Residues G178, A204–G205, and N226–T227 contribute to the 1-deoxy-D-xylulose 5-phosphate site.

This sequence belongs to the ThiG family. As to quaternary structure, homotetramer. Forms heterodimers with either ThiH or ThiS.

Its subcellular location is the plastid. The protein resides in the chloroplast. It catalyses the reaction [ThiS sulfur-carrier protein]-C-terminal-Gly-aminoethanethioate + 2-iminoacetate + 1-deoxy-D-xylulose 5-phosphate = [ThiS sulfur-carrier protein]-C-terminal Gly-Gly + 2-[(2R,5Z)-2-carboxy-4-methylthiazol-5(2H)-ylidene]ethyl phosphate + 2 H2O + H(+). The protein operates within cofactor biosynthesis; thiamine diphosphate biosynthesis. Its function is as follows. Catalyzes the rearrangement of 1-deoxy-D-xylulose 5-phosphate (DXP) to produce the thiazole phosphate moiety of thiamine. Sulfur is provided by the thiocarboxylate moiety of the carrier protein ThiS. In vitro, sulfur can be provided by H(2)S. This Gracilaria tenuistipitata var. liui (Red alga) protein is Thiazole synthase.